Reading from the N-terminus, the 180-residue chain is Small ribosomal subunit protein uS5 (180 aa).

Positions 1 to 20 are disordered; that stretch reads MAKMQGRMQGKVAPGDDRGD. Positions 22–85 constitute an S5 DRBM domain; the sequence is LKEKMVAINR…DEARRKMIKV (64 aa).

The protein belongs to the universal ribosomal protein uS5 family. As to quaternary structure, part of the 30S ribosomal subunit. Contacts proteins S4 and S8.

Functionally, with S4 and S12 plays an important role in translational accuracy. In terms of biological role, located at the back of the 30S subunit body where it stabilizes the conformation of the head with respect to the body. The polypeptide is Small ribosomal subunit protein uS5 (Nitrosospira multiformis (strain ATCC 25196 / NCIMB 11849 / C 71)).